The primary structure comprises 285 residues: Dermonecrotic toxin LlSicTox-alphaIII2 (285 aa).

Residue histidine 12 is part of the active site. The Mg(2+) site is built by glutamate 32 and aspartate 34. Histidine 47 acts as the Nucleophile in catalysis. A disulfide bond links cysteine 51 and cysteine 57. Aspartate 91 lines the Mg(2+) pocket.

It belongs to the arthropod phospholipase D family. Class I subfamily. Requires Mg(2+) as cofactor. In terms of tissue distribution, expressed by the venom gland.

The protein localises to the secreted. It catalyses the reaction an N-(acyl)-sphingosylphosphocholine = an N-(acyl)-sphingosyl-1,3-cyclic phosphate + choline. The catalysed reaction is an N-(acyl)-sphingosylphosphoethanolamine = an N-(acyl)-sphingosyl-1,3-cyclic phosphate + ethanolamine. It carries out the reaction a 1-acyl-sn-glycero-3-phosphocholine = a 1-acyl-sn-glycero-2,3-cyclic phosphate + choline. The enzyme catalyses a 1-acyl-sn-glycero-3-phosphoethanolamine = a 1-acyl-sn-glycero-2,3-cyclic phosphate + ethanolamine. Dermonecrotic toxins cleave the phosphodiester linkage between the phosphate and headgroup of certain phospholipids (sphingolipid and lysolipid substrates), forming an alcohol (often choline) and a cyclic phosphate. This toxin acts on sphingomyelin (SM) (228.2 U/mg). It may also act on ceramide phosphoethanolamine (CPE), lysophosphatidylcholine (LPC) and lysophosphatidylethanolamine (LPE), but not on lysophosphatidylserine (LPS), and lysophosphatidylglycerol (LPG). It acts by transphosphatidylation, releasing exclusively cyclic phosphate products as second products. Induces dermonecrosis, hemolysis, increased vascular permeability, edema, inflammatory response, and platelet aggregation. Is lethal to mice. The protein is Dermonecrotic toxin LlSicTox-alphaIII2 of Loxosceles laeta (South American recluse spider).